We begin with the raw amino-acid sequence, 884 residues long: DNA replication licensing factor mcm2 (884 aa).

Residues 1–16 show a composition bias toward polar residues; it reads MADSSESFNIATSPRT. 2 disordered regions span residues 1 to 61 and 120 to 151; these read MADS…IGDA and LYDS…EDEE. The segment covering 47–58 has biased composition (acidic residues); it reads PREEEEDGEELI. The segment at 314–340 adopts a C4-type zinc-finger fold; sequence CNKCNFILGPFFQSQNQEVKPGSCPEC. Residues 458–664 form the MCM domain; sequence IGERIFASIA…VQDEMLARFV (207 aa). Residues serine 515 and glutamine 516 each contribute to the ADP site. The Arginine finger signature appears at 640-643; sequence SRFD.

This sequence belongs to the MCM family. Component of the mcm2-7 complex (RLF-M). The complex forms a toroidal hexameric ring with the proposed subunit order mcm2-mcm6-mcm4-mcm7-mcm3-mcm5. Component of the replisome complex. Component of the CMG helicase complex, composed of the mcm2-7 complex, the GINS complex and cdc45. Post-translationally, may be in a phosphorylated state in the mitotic mcm complex. Phosphorylated in the interphase mcm complex. Phosphorylated by the cdc7-dbf4 and cdc7-dbf4b complexes.

It localises to the nucleus. The protein localises to the chromosome. The catalysed reaction is ATP + H2O = ADP + phosphate + H(+). Acts as a component of the MCM2-7 complex (MCM complex) which is the replicative helicase essential for 'once per cell cycle' DNA replication initiation and elongation in eukaryotic cells. Core component of CDC45-MCM-GINS (CMG) helicase, the molecular machine that unwinds template DNA during replication, and around which the replisome is built. The active ATPase sites in the MCM2-7 ring are formed through the interaction surfaces of two neighboring subunits such that a critical structure of a conserved arginine finger motif is provided in trans relative to the ATP-binding site of the Walker A box of the adjacent subunit. The six ATPase active sites, however, are likely to contribute differentially to the complex helicase activity. Required for the entry in S phase and for cell division. In Xenopus tropicalis (Western clawed frog), this protein is DNA replication licensing factor mcm2.